The primary structure comprises 507 residues: uncharacterized protein (507 aa).

The next 14 helical transmembrane spans lie at 8-28 (VKGVSWHLLSYFLAAPIAYLV), 41-61 (VGLFYAVLDFFSMLVVFRAFG), 86-106 (IVFVGILQTILAFIVAFLVVI), 130-150 (INILIIMAMGYYFLDSIVAFF), 171-191 (ILSVFIFSLIFIYLFNVHNAY), 193-213 (PSVSYLLMAVVMIIIYGYIVV), 235-255 (LFSYGMYVMIGYAGSLILGYL), 275-295 (VAMPTVNILSYFAFSVGAVLF), 323-343 (IIVTPLAILMAYFPTVIINIL), 355-375 (IQILSFGAMFLTFNSIGFNIL), 387-407 (ILYIGASFNLIFNILLIPKFG), 408-428 (IIGAAITTVFGYFIMWIFQIW), 444-464 (ILVILVGIFSLIPVMFIKDLI), and 467-487 (VILQLFVCGVVYFGIYILGIF).

Belongs to the polysaccharide synthase family.

It is found in the cell membrane. This is an uncharacterized protein from Methanocaldococcus jannaschii (strain ATCC 43067 / DSM 2661 / JAL-1 / JCM 10045 / NBRC 100440) (Methanococcus jannaschii).